The sequence spans 350 residues: Pleckstrin (350 aa).

The region spanning 4–101 is the PH 1 domain; it reads KRIREGYLVK…WVRDIKKAIK (98 aa). Lys-64 carries the N6-acetyllysine modification. Ser-113 and Ser-117 each carry phosphoserine. Positions 136-221 constitute a DEP domain; it reads PEKGIKELNL…NPDAFYYFPD (86 aa). One can recognise a PH 2 domain in the interval 244–347; it reads IIIKQGCLLK…WIKAIQVASR (104 aa).

Its function is as follows. Major protein kinase C substrate of platelets. In Rattus norvegicus (Rat), this protein is Pleckstrin (Plek).